A 446-amino-acid polypeptide reads, in one-letter code: tRNA-2-methylthio-N(6)-dimethylallyladenosine synthase (446 aa).

Residues 2–122 form the MTTase N-terminal domain; sequence KKAYVKSYGC…LPDLLRQSRE (121 aa). 6 residues coordinate [4Fe-4S] cluster: Cys-11, Cys-47, Cys-85, Cys-157, Cys-161, and Cys-164. In terms of domain architecture, Radical SAM core spans 143–375; sequence RNRGVTGFLT…QDLLDRQRHA (233 aa). Residues 378–440 enclose the TRAM domain; the sequence is AASVGTLTEI…SNSLFGEALE (63 aa).

This sequence belongs to the methylthiotransferase family. MiaB subfamily. Monomer. [4Fe-4S] cluster serves as cofactor.

It localises to the cytoplasm. It catalyses the reaction N(6)-dimethylallyladenosine(37) in tRNA + (sulfur carrier)-SH + AH2 + 2 S-adenosyl-L-methionine = 2-methylsulfanyl-N(6)-dimethylallyladenosine(37) in tRNA + (sulfur carrier)-H + 5'-deoxyadenosine + L-methionine + A + S-adenosyl-L-homocysteine + 2 H(+). Its function is as follows. Catalyzes the methylthiolation of N6-(dimethylallyl)adenosine (i(6)A), leading to the formation of 2-methylthio-N6-(dimethylallyl)adenosine (ms(2)i(6)A) at position 37 in tRNAs that read codons beginning with uridine. The chain is tRNA-2-methylthio-N(6)-dimethylallyladenosine synthase from Methylorubrum extorquens (strain CM4 / NCIMB 13688) (Methylobacterium extorquens).